The primary structure comprises 337 residues: HTH-type transcriptional regulator DegA (337 aa).

The region spanning 1-57 is the HTH lacI-type domain; it reads MKTTIYDVAKAAGVSITTVSRVINNTGRISDKTRQKVMNVMNEMAYTPNVHAAALTG. Residues 5-24 constitute a DNA-binding region (H-T-H motif); it reads IYDVAKAAGVSITTVSRVIN. Residues 300 to 319 are disordered; sequence AERHRTAGRSNRGKRKAKQK.

Functionally, involved in the control of degradation of B.subtilis amidophosphoribosyltransferase (purF). Probably activates the gene for a degradative protease. The polypeptide is HTH-type transcriptional regulator DegA (degA) (Bacillus subtilis (strain 168)).